Reading from the N-terminus, the 433-residue chain is tRNA(Ile)-lysidine synthase (433 aa).

37 to 42 (SGGKDS) contributes to the ATP binding site.

It belongs to the tRNA(Ile)-lysidine synthase family.

It localises to the cytoplasm. The catalysed reaction is cytidine(34) in tRNA(Ile2) + L-lysine + ATP = lysidine(34) in tRNA(Ile2) + AMP + diphosphate + H(+). Ligates lysine onto the cytidine present at position 34 of the AUA codon-specific tRNA(Ile) that contains the anticodon CAU, in an ATP-dependent manner. Cytidine is converted to lysidine, thus changing the amino acid specificity of the tRNA from methionine to isoleucine. The chain is tRNA(Ile)-lysidine synthase from Leptospira interrogans serogroup Icterohaemorrhagiae serovar Lai (strain 56601).